The chain runs to 262 residues: Diphthine synthase (262 aa).

Residues Leu10, Asp87, Val90, 115–116, Leu166, Ala209, and His234 each bind S-adenosyl-L-methionine; that span reads SI.

The protein belongs to the diphthine synthase family. As to quaternary structure, homodimer.

The catalysed reaction is 2-[(3S)-amino-3-carboxypropyl]-L-histidyl-[translation elongation factor 2] + 3 S-adenosyl-L-methionine = diphthine-[translation elongation factor 2] + 3 S-adenosyl-L-homocysteine + 3 H(+). The protein operates within protein modification; peptidyl-diphthamide biosynthesis. Its function is as follows. S-adenosyl-L-methionine-dependent methyltransferase that catalyzes the trimethylation of the amino group of the modified target histidine residue in translation elongation factor 2 (EF-2), to form an intermediate called diphthine. The three successive methylation reactions represent the second step of diphthamide biosynthesis. In Pyrococcus abyssi (strain GE5 / Orsay), this protein is Diphthine synthase.